A 414-amino-acid chain; its full sequence is MDSVIEDVRLRKIIDSRGNPTVEADVLTWNGFGRAAAPSGASTGINEVTSFPDGGVDQVITDVEDLISSEIIGMEAEDIREIDNVLKEIDGTDNFSTIGGNTAVAVSMATAKAAASSYNLPLYKFLGGIMPTQIPFPLGNMINGGAHAGTNAPDIQEFLVIPVGASNITEAITTNINVHRRIKAKIQEKDKTFTGGKGDEGGWAPNLTNEEALEIQFTSCEEVSDETGVLVKPGLDVASSEFWNEKEQKYVYEREGTSRTVEEQIDYIADLIDTYKFFYVEDPIQENDFEAFAELTSKSGKDCLICGDDLFVTNAEILAKGIEAHAGNSLIIKPNQIGTLTDTYNTIKLAKANKYVPVVSHRSGETTDETIAHLAVAFNAPIIKTGAAGGERIAKLNELVRIEEELLNPSMADL.

Q156 is a binding site for (2R)-2-phosphoglycerate. The Proton donor role is filled by E200. The Mg(2+) site is built by D236, E281, and D308. 4 residues coordinate (2R)-2-phosphoglycerate: K333, R362, S363, and K384. The active-site Proton acceptor is the K333.

It belongs to the enolase family. It depends on Mg(2+) as a cofactor.

It is found in the cytoplasm. The protein localises to the secreted. Its subcellular location is the cell surface. It catalyses the reaction (2R)-2-phosphoglycerate = phosphoenolpyruvate + H2O. The protein operates within carbohydrate degradation; glycolysis; pyruvate from D-glyceraldehyde 3-phosphate: step 4/5. Its function is as follows. Catalyzes the reversible conversion of 2-phosphoglycerate (2-PG) into phosphoenolpyruvate (PEP). It is essential for the degradation of carbohydrates via glycolysis. This is Enolase from Methanosphaera stadtmanae (strain ATCC 43021 / DSM 3091 / JCM 11832 / MCB-3).